A 150-amino-acid polypeptide reads, in one-letter code: MKYQQLENLESGWKWKYLVKKHREGELITRYIEASAAQEAVDVLLSLENEPVLVNNWIDKHMNPELVNRMKQTIRARRKRHFNAEHQHTRKKSIDLEFIVWQRLAGLAQRRGKTLSETIVQLIEDAENKEKYANKMSSLKQDLQALLGKE.

Belongs to the MatP family. As to quaternary structure, homodimer.

The protein resides in the cytoplasm. Its function is as follows. Required for spatial organization of the terminus region of the chromosome (Ter macrodomain) during the cell cycle. Prevents early segregation of duplicated Ter macrodomains during cell division. Binds specifically to matS, which is a 13 bp signature motif repeated within the Ter macrodomain. This is Macrodomain Ter protein from Escherichia coli (strain SMS-3-5 / SECEC).